A 237-amino-acid polypeptide reads, in one-letter code: Type III pantothenate kinase (237 aa).

6–13 (DAGNSRVK) lines the ATP pocket. Substrate contacts are provided by residues tyrosine 86 and 93–96 (GADR). The Proton acceptor role is filled by aspartate 95. Threonine 118 provides a ligand contact to ATP. Threonine 168 contacts substrate.

Belongs to the type III pantothenate kinase family. In terms of assembly, homodimer. NH4(+) is required as a cofactor. K(+) serves as cofactor.

The protein localises to the cytoplasm. The enzyme catalyses (R)-pantothenate + ATP = (R)-4'-phosphopantothenate + ADP + H(+). It participates in cofactor biosynthesis; coenzyme A biosynthesis; CoA from (R)-pantothenate: step 1/5. In terms of biological role, catalyzes the phosphorylation of pantothenate (Pan), the first step in CoA biosynthesis. The sequence is that of Type III pantothenate kinase from Chromobacterium violaceum (strain ATCC 12472 / DSM 30191 / JCM 1249 / CCUG 213 / NBRC 12614 / NCIMB 9131 / NCTC 9757 / MK).